A 178-amino-acid polypeptide reads, in one-letter code: Stage V sporulation protein T (178 aa).

One can recognise a SpoVT-AbrB domain in the interval 5-51; that stretch reads GIVRRIDDLGRVVIPKEIRRTLRIREGDPLEIFVDRDGEVILKKYSP. Residues 56 to 178 form a GAF-like region; that stretch reads GDFAKEYADA…AGFLARQMEQ (123 aa).

To B.subtilis AbrB and Abh. Homotetramer. Two monomers dimerize via their N-terminal swapped-hairpin domains. These dimers further associate into tetramers through helical interactions between their C-terminal GAF-like domains.

Functionally, transcriptional factor that positively regulates or negatively the expression of a large number of forespore-specific sigma G-dependent genes. May provide a mechanism of feedback control that is important for forespore development. SpoVT levels during spore formation have a major impact on the germination and the resistance of the resultant spores. In Bacillus subtilis (strain 168), this protein is Stage V sporulation protein T.